Here is a 242-residue protein sequence, read N- to C-terminus: 3-dehydroquinate dehydratase (242 aa).

3-dehydroquinate contacts are provided by residues 39 to 41 (EIR) and Arg73. Residue His135 is the Proton donor/acceptor of the active site. Catalysis depends on Lys162, which acts as the Schiff-base intermediate with substrate. 3-dehydroquinate is bound by residues Arg203 and Gln228.

The protein belongs to the type-I 3-dehydroquinase family. In terms of assembly, homodimer.

The catalysed reaction is 3-dehydroquinate = 3-dehydroshikimate + H2O. It participates in metabolic intermediate biosynthesis; chorismate biosynthesis; chorismate from D-erythrose 4-phosphate and phosphoenolpyruvate: step 3/7. Functionally, involved in the third step of the chorismate pathway, which leads to the biosynthesis of aromatic amino acids. Catalyzes the cis-dehydration of 3-dehydroquinate (DHQ) and introduces the first double bond of the aromatic ring to yield 3-dehydroshikimate. In Methanosarcina barkeri (strain Fusaro / DSM 804), this protein is 3-dehydroquinate dehydratase.